Consider the following 91-residue polypeptide: DNA-directed RNA polymerase subunit omega (91 aa).

The protein belongs to the RNA polymerase subunit omega family. As to quaternary structure, the RNAP catalytic core consists of 2 alpha, 1 beta, 1 beta' and 1 omega subunit. When a sigma factor is associated with the core the holoenzyme is formed, which can initiate transcription.

The catalysed reaction is RNA(n) + a ribonucleoside 5'-triphosphate = RNA(n+1) + diphosphate. Promotes RNA polymerase assembly. Latches the N- and C-terminal regions of the beta' subunit thereby facilitating its interaction with the beta and alpha subunits. The sequence is that of DNA-directed RNA polymerase subunit omega from Pectobacterium atrosepticum (strain SCRI 1043 / ATCC BAA-672) (Erwinia carotovora subsp. atroseptica).